A 317-amino-acid polypeptide reads, in one-letter code: MGTGNQTWVREFVLLGLSSDWDTEVSLFVLFLITYMVTVLGNFLIILLIRLDSRLHTPMYFFLTNLSLVDVSYATSIIPQMLAHLLAAHKAIPFVSCAAQLFFSLGLGGIEFVLLAVMAYDRYVAVCDPLRYSVIMHGGLCTRLAITSWVSGSMNSLMQTVITFQLPMCTNKYIDHISCELLAVVRLACVDTSSNEIAIMVSSIVLLMTPFCLVLLSYIQIISTILKIQSTEGRKKAFHTCASHLTVVVLCYGMAIFTYIQPRSSPSVLQEKLISLFYSVLTPMLNPMIYSVRNKEVKGAWQKLLGQLTGITSKLAT.

At 1-25 (MGTGNQTWVREFVLLGLSSDWDTEV) the chain is on the extracellular side. The N-linked (GlcNAc...) asparagine glycan is linked to Asn-5. A helical membrane pass occupies residues 26-49 (SLFVLFLITYMVTVLGNFLIILLI). Residues 50–57 (RLDSRLHT) are Cytoplasmic-facing. The chain crosses the membrane as a helical span at residues 58 to 79 (PMYFFLTNLSLVDVSYATSIIP). Residues 80–100 (QMLAHLLAAHKAIPFVSCAAQ) lie on the Extracellular side of the membrane. A helical membrane pass occupies residues 101-120 (LFFSLGLGGIEFVLLAVMAY). Residues 121–139 (DRYVAVCDPLRYSVIMHGG) are Cytoplasmic-facing. The chain crosses the membrane as a helical span at residues 140–158 (LCTRLAITSWVSGSMNSLM). Residues 159–196 (QTVITFQLPMCTNKYIDHISCELLAVVRLACVDTSSNE) are Extracellular-facing. The helical transmembrane segment at 197–219 (IAIMVSSIVLLMTPFCLVLLSYI) threads the bilayer. Over 220 to 236 (QIISTILKIQSTEGRKK) the chain is Cytoplasmic. A helical transmembrane segment spans residues 237–260 (AFHTCASHLTVVVLCYGMAIFTYI). Residues 261 to 272 (QPRSSPSVLQEK) are Extracellular-facing. A helical membrane pass occupies residues 273-292 (LISLFYSVLTPMLNPMIYSV). Residues 293-317 (RNKEVKGAWQKLLGQLTGITSKLAT) lie on the Cytoplasmic side of the membrane.

This sequence belongs to the G-protein coupled receptor 1 family.

It is found in the cell membrane. Putative odorant or sperm cell receptor. The sequence is that of Olfactory receptor-like protein OLF3 from Canis lupus familiaris (Dog).